Reading from the N-terminus, the 116-residue chain is Large ribosomal subunit protein bL17 (116 aa).

This sequence belongs to the bacterial ribosomal protein bL17 family. Part of the 50S ribosomal subunit. Contacts protein L32.

The polypeptide is Large ribosomal subunit protein bL17 (Chloroflexus aurantiacus (strain ATCC 29366 / DSM 635 / J-10-fl)).